Consider the following 151-residue polypeptide: Phosphoribosyl-AMP cyclohydrolase (151 aa).

Asp94 lines the Mg(2+) pocket. A Zn(2+)-binding site is contributed by Cys95. Mg(2+)-binding residues include Asp96 and Asp98. Positions 112 and 119 each coordinate Zn(2+).

This sequence belongs to the PRA-CH family. As to quaternary structure, homodimer. The cofactor is Mg(2+). Zn(2+) serves as cofactor.

It localises to the cytoplasm. The enzyme catalyses 1-(5-phospho-beta-D-ribosyl)-5'-AMP + H2O = 1-(5-phospho-beta-D-ribosyl)-5-[(5-phospho-beta-D-ribosylamino)methylideneamino]imidazole-4-carboxamide. The protein operates within amino-acid biosynthesis; L-histidine biosynthesis; L-histidine from 5-phospho-alpha-D-ribose 1-diphosphate: step 3/9. In terms of biological role, catalyzes the hydrolysis of the adenine ring of phosphoribosyl-AMP. The polypeptide is Phosphoribosyl-AMP cyclohydrolase (Rhodopseudomonas palustris (strain TIE-1)).